We begin with the raw amino-acid sequence, 1367 residues long: Dynactin, 150 kDa isoform (1367 aa).

One can recognise a CAP-Gly domain in the interval 28–70 (GETAFAPGTWVGIELDEPSGKNDGSVQGERYFNCEMGYGMFVR). Residues 76 to 318 (VIAQPPPPPP…NLKATTITPR (243 aa)) form a disordered region. 2 stretches are compositionally biased toward low complexity: residues 88–99 (TFRRSVTTRPTS) and 132–149 (PSRT…RSPT). The span at 150 to 163 (KQLATASSSGNPSR) shows a compositional bias: polar residues. Low complexity-rich tracts occupy residues 164 to 190 (SGTP…SRHS) and 243 to 259 (STGS…KRGS). 3 coiled-coil regions span residues 321-598 (ITNT…MQEE), 637-698 (LQSD…EAEQ), and 1039-1199 (AELK…RARL).

It belongs to the dynactin 150 kDa subunit family. Large macromolecular complex of at least 10 components; p150(glued) binds directly to microtubules and to cytoplasmic dynein.

It is found in the cytoplasm. Its subcellular location is the cytoskeleton. Its function is as follows. Required for the cytoplasmic dynein-driven retrograde movement of vesicles and organelles along microtubules. Dynein-dynactin interaction is a key component of the mechanism of axonal transport of vesicles and organelles. In Neurospora crassa (strain ATCC 24698 / 74-OR23-1A / CBS 708.71 / DSM 1257 / FGSC 987), this protein is Dynactin, 150 kDa isoform (ro-3).